The following is a 470-amino-acid chain: Myricetin 3-O-rhamnoside 1,2-glucosyltransferase UGT709G2 (470 aa).

The Proton acceptor role is filled by H20. Residue H20 participates in an anthocyanidin binding. The active-site Charge relay is the D117. Residues A340, Q342, H357, W360, N361, S362, and E365 each coordinate UDP-alpha-D-glucose. A380 contributes to the an anthocyanidin binding site. 2 residues coordinate UDP-alpha-D-glucose: D381 and Q382.

The protein belongs to the UDP-glycosyltransferase family. Expressed in young cromes.

It carries out the reaction myricetin 3-O-alpha-L-rhamnoside + UDP-alpha-D-glucose = myricetin 3-O-[beta-D-glucosyl-(1-&gt;2)-alpha-L-rhamnoside] + UDP + H(+). The protein operates within flavonoid metabolism. Functionally, glucosyltransferase involved in montbretin A (MbA) biosynthesis. Catalyzes the glucosylation of myricetin 3-O-alpha-L-rhamnoside (MR) to produce myricetin 3-O-[beta-D-glucosyl-(1-&gt;2)-alpha-L-rhamnoside] (MRG), a precursor of MbA. MbA is a potent inhibitor of human pancreatic alpha-amylase and is being developed as drug candidate to treat type-2 diabetes. In vitro, is able to transfer UDP-xylose with 50-fold less efficiency compared with UDP-glucose. In vitro, can use myricetin 3-O-glucoside and quercetin 3-O-glucoside as substrates, although these two flavonoids may not be physiological substrates in vivo. The chain is Myricetin 3-O-rhamnoside 1,2-glucosyltransferase UGT709G2 from Crocosmia x crocosmiiflora (Montbretia).